A 679-amino-acid polypeptide reads, in one-letter code: Glycine--tRNA ligase beta subunit (679 aa).

It belongs to the class-II aminoacyl-tRNA synthetase family. In terms of assembly, tetramer of two alpha and two beta subunits.

It is found in the cytoplasm. It catalyses the reaction tRNA(Gly) + glycine + ATP = glycyl-tRNA(Gly) + AMP + diphosphate. The polypeptide is Glycine--tRNA ligase beta subunit (Streptococcus pyogenes serotype M3 (strain ATCC BAA-595 / MGAS315)).